Here is a 149-residue protein sequence, read N- to C-terminus: IQ domain-containing protein F5 (149 aa).

IQ domains are found at residues 12-41 (ENKA…RAWI) and 68-97 (QEWA…AVRI).

This chain is IQ domain-containing protein F5 (IQCF5), found in Bos taurus (Bovine).